The chain runs to 438 residues: Serine hydroxymethyltransferase (438 aa).

Residues Leu-119 and 123–125 (GHL) contribute to the (6S)-5,6,7,8-tetrahydrofolate site. N6-(pyridoxal phosphate)lysine is present on Lys-228. 370 to 372 (SPF) is a (6S)-5,6,7,8-tetrahydrofolate binding site.

The protein belongs to the SHMT family. Homodimer. It depends on pyridoxal 5'-phosphate as a cofactor.

It is found in the cytoplasm. It catalyses the reaction (6R)-5,10-methylene-5,6,7,8-tetrahydrofolate + glycine + H2O = (6S)-5,6,7,8-tetrahydrofolate + L-serine. It functions in the pathway one-carbon metabolism; tetrahydrofolate interconversion. The protein operates within amino-acid biosynthesis; glycine biosynthesis; glycine from L-serine: step 1/1. Its function is as follows. Catalyzes the reversible interconversion of serine and glycine with tetrahydrofolate (THF) serving as the one-carbon carrier. This reaction serves as the major source of one-carbon groups required for the biosynthesis of purines, thymidylate, methionine, and other important biomolecules. Also exhibits THF-independent aldolase activity toward beta-hydroxyamino acids, producing glycine and aldehydes, via a retro-aldol mechanism. The sequence is that of Serine hydroxymethyltransferase from Chlorobium chlorochromatii (strain CaD3).